Consider the following 209-residue polypeptide: Thymidylate kinase (209 aa).

10-17 (GLDGAGKS) provides a ligand contact to ATP.

Belongs to the thymidylate kinase family.

The enzyme catalyses dTMP + ATP = dTDP + ADP. In terms of biological role, phosphorylation of dTMP to form dTDP in both de novo and salvage pathways of dTTP synthesis. The protein is Thymidylate kinase of Francisella tularensis subsp. holarctica (strain OSU18).